Here is a 597-residue protein sequence, read N- to C-terminus: Elongation factor 4 (597 aa).

The tr-type G domain occupies 2 to 184 (KNIRNFSIIA…EIVAKIPAPT (183 aa)). Residues 14–19 (DHGKST) and 131–134 (NKID) contribute to the GTP site.

This sequence belongs to the TRAFAC class translation factor GTPase superfamily. Classic translation factor GTPase family. LepA subfamily.

Its subcellular location is the cell inner membrane. The enzyme catalyses GTP + H2O = GDP + phosphate + H(+). Functionally, required for accurate and efficient protein synthesis under certain stress conditions. May act as a fidelity factor of the translation reaction, by catalyzing a one-codon backward translocation of tRNAs on improperly translocated ribosomes. Back-translocation proceeds from a post-translocation (POST) complex to a pre-translocation (PRE) complex, thus giving elongation factor G a second chance to translocate the tRNAs correctly. Binds to ribosomes in a GTP-dependent manner. The polypeptide is Elongation factor 4 (Neisseria meningitidis serogroup B (strain ATCC BAA-335 / MC58)).